The following is a 347-amino-acid chain: Phospho-N-acetylmuramoyl-pentapeptide-transferase (347 aa).

10 helical membrane passes run 10–30, 67–87, 91–111, 127–147, 164–184, 195–215, 220–240, 250–270, 275–295, and 325–345; these read SLVF…IFLG, AGGI…LPLG, TWLF…DDIV, FVLQ…IYKG, LGHS…AIVG, LDGL…VVAV, IPLA…SLAF, VFMG…CAVM, LLLI…ILQI, and VVKR…IAAL.

This sequence belongs to the glycosyltransferase 4 family. MraY subfamily. It depends on Mg(2+) as a cofactor.

Its subcellular location is the cell inner membrane. The catalysed reaction is UDP-N-acetyl-alpha-D-muramoyl-L-alanyl-gamma-D-glutamyl-meso-2,6-diaminopimeloyl-D-alanyl-D-alanine + di-trans,octa-cis-undecaprenyl phosphate = di-trans,octa-cis-undecaprenyl diphospho-N-acetyl-alpha-D-muramoyl-L-alanyl-D-glutamyl-meso-2,6-diaminopimeloyl-D-alanyl-D-alanine + UMP. It functions in the pathway cell wall biogenesis; peptidoglycan biosynthesis. In terms of biological role, catalyzes the initial step of the lipid cycle reactions in the biosynthesis of the cell wall peptidoglycan: transfers peptidoglycan precursor phospho-MurNAc-pentapeptide from UDP-MurNAc-pentapeptide onto the lipid carrier undecaprenyl phosphate, yielding undecaprenyl-pyrophosphoryl-MurNAc-pentapeptide, known as lipid I. This chain is Phospho-N-acetylmuramoyl-pentapeptide-transferase, found in Chlamydia abortus (strain DSM 27085 / S26/3) (Chlamydophila abortus).